Consider the following 161-residue polypeptide: Phosphopantetheine adenylyltransferase (161 aa).

Substrate is bound at residue T10. ATP contacts are provided by residues 10–11 (TF) and H18. Positions 42, 74, and 88 each coordinate substrate. Residues 89 to 91 (GVR), E99, and 124 to 130 (LSFVSSS) each bind ATP.

Belongs to the bacterial CoaD family. As to quaternary structure, homohexamer. Requires Mg(2+) as cofactor.

The protein localises to the cytoplasm. The catalysed reaction is (R)-4'-phosphopantetheine + ATP + H(+) = 3'-dephospho-CoA + diphosphate. It participates in cofactor biosynthesis; coenzyme A biosynthesis; CoA from (R)-pantothenate: step 4/5. Reversibly transfers an adenylyl group from ATP to 4'-phosphopantetheine, yielding dephospho-CoA (dPCoA) and pyrophosphate. The sequence is that of Phosphopantetheine adenylyltransferase from Proteus mirabilis (strain HI4320).